Reading from the N-terminus, the 510-residue chain is GMP synthase [glutamine-hydrolyzing] (510 aa).

Residues 5 to 195 enclose the Glutamine amidotransferase type-1 domain; that stretch reads TVVVLDFGGQ…LFEICGLRGD (191 aa). Cys-82 (nucleophile) is an active-site residue. Active-site residues include His-169 and Glu-171. Positions 196–385 constitute a GMPS ATP-PPase domain; that stretch reads WDLSDFISEA…LGIPAEILWR (190 aa). Position 223–229 (223–229) interacts with ATP; sequence SGGVDSS.

In terms of assembly, homodimer.

It carries out the reaction XMP + L-glutamine + ATP + H2O = GMP + L-glutamate + AMP + diphosphate + 2 H(+). Its pathway is purine metabolism; GMP biosynthesis; GMP from XMP (L-Gln route): step 1/1. Functionally, catalyzes the synthesis of GMP from XMP. The chain is GMP synthase [glutamine-hydrolyzing] from Syntrophomonas wolfei subsp. wolfei (strain DSM 2245B / Goettingen).